The chain runs to 235 residues: Ribose-5-phosphate isomerase A (235 aa).

Substrate-binding positions include 32 to 35 (TGST), 89 to 92 (DGAD), and 102 to 105 (KGGG). Glutamate 111 functions as the Proton acceptor in the catalytic mechanism. Residue lysine 129 coordinates substrate.

It belongs to the ribose 5-phosphate isomerase family. As to quaternary structure, homodimer.

It carries out the reaction aldehydo-D-ribose 5-phosphate = D-ribulose 5-phosphate. The protein operates within carbohydrate degradation; pentose phosphate pathway; D-ribose 5-phosphate from D-ribulose 5-phosphate (non-oxidative stage): step 1/1. Catalyzes the reversible conversion of ribose-5-phosphate to ribulose 5-phosphate. This is Ribose-5-phosphate isomerase A from Synechocystis sp. (strain ATCC 27184 / PCC 6803 / Kazusa).